A 180-amino-acid polypeptide reads, in one-letter code: Transmembrane protein 190 (180 aa).

An N-terminal signal peptide occupies residues 1–21 (MVGSGIPALGLLLLMQGSADG). The Extracellular portion of the chain corresponds to 22 to 81 (NGIQGFFYPWSCEGDVWDRESCGGQAAIENPNLCLRLRCCYRDGVCYHQRPDENMRRKHM). The region spanning 31-71 (WSCEGDVWDRESCGGQAAIENPNLCLRLRCCYRDGVCYHQR) is the P-type domain. 3 disulfide bridges follow: Cys33/Cys61, Cys43/Cys60, and Cys55/Cys67. Residues 82–102 (WALGWTCGGLLFLITSICLFW) form a helical membrane-spanning segment. Residues 103–180 (WARRHDMLRL…EETEGGDEDD (78 aa)) lie on the Cytoplasmic side of the membrane. A compositionally biased stretch (basic and acidic residues) spans 131-140 (KDRTPSEKKT). A disordered region spans residues 131-180 (KDRTPSEKKTPSVGSIPPAAPTEGALDVSGGTEGEGTEGGEETEGGDEDD). Positions 165–180 (EGTEGGEETEGGDEDD) are enriched in acidic residues.

The protein localises to the membrane. The protein is Transmembrane protein 190 (TMEM190) of Bos taurus (Bovine).